The primary structure comprises 1136 residues: Probable LRR receptor-like serine/threonine-protein kinase At4g36180 (1136 aa).

The first 22 residues, 1–22, serve as a signal peptide directing secretion; the sequence is MAMDISLFFIFLVIYAPLVSYA. At 23–751 the chain is on the extracellular side; it reads DESQAEIDAL…TAEGKKKKRK (729 aa). LRR repeat units lie at residues 93-115, 117-139, 141-162, 163-186, 187-210, 211-233, 235-256, and 259-280; these read MLRKLSLRSNSFNGTIPTSLAYC, RLLSVFLQYNSLSGKLPPAMRNL, SLEVFNVAGNRLSGEIPVGLPS, SLQFLDISSNTFSGQIPSGLANLT, QLQLLNLSYNQLTGEIPASLGNLQ, SLQYLWLDFNLLQGTLPSAISNC, SLVHLSASENEIGGVIPAAYGA, and KLEVLSLSNNNFSGTVPFSLFC. 2 N-linked (GlcNAc...) asparagine glycosylation sites follow: N105 and N138. 3 N-linked (GlcNAc...) asparagine glycosylation sites follow: N184, N192, and N232. N-linked (GlcNAc...) asparagine glycosylation is found at N269 and N281. LRR repeat units lie at residues 283–304, 309–330, 333–355, 357–379, 381–403, 405–426, 429–452, 453–479, 480–500, 501–524, 525–546, 549–571, 573–595, 597–620, 621–643, 645–666, 669–691, and 694–716; these read SLTIVQLGFNAFSDIVRPETTA, GLQVLDLQENRISGRFPLWLTN, SLKNLDVSGNLFSGEIPPDIGNL, RLEELKLANNSLTGEIPVEIKQC, SLDVLDFEGNSLKGQIPEFLGYM, ALKVLSLGRNSFSGYVPSSMVN, QLERLNLGENNLNGSFPVELMALT, SLSELDLSGNRFSGAVPVSISNLSNLS, FLNLSGNGFSGEIPASVGNLF, KLTALDLSKQNMSGEVPVELSGLP, NVQVIALQGNNFSGVVPEGFSS, SLRYVNLSSNSFSGEIPQTFGFL, LLVSLSLSDNHISGSIPPEIGNC, ALEVLELRSNRLMGHIPADLSRLP, RLKVLDLGQNNLSGEIPPEISQS, SLNSLSLDHNHLSGVIPGSFSG, NLTKMDLSVNNLTGEIPASLALI, and NLVYFNVSSNNLKGEIPASLGSR. N365 carries an N-linked (GlcNAc...) asparagine glycan. N-linked (GlcNAc...) asparagine glycosylation is found at N441, N474, N477, N482, N511, N535, N554, and N594. Residue N631 is glycosylated (N-linked (GlcNAc...) asparagine). N669, N679, N699, and N719 each carry an N-linked (GlcNAc...) asparagine glycan. The chain crosses the membrane as a helical span at residues 752 to 772; it reads MILMIVMAAIGAFLLSLFCCF. At 773 to 1136 the chain is on the cytoplasmic side; the sequence is YVYTLLKWRK…ADPTSQPSPA (364 aa). The disordered stretch occupies residues 786–819; that stretch reads QQSTTGEKKRSPGRTSAGSRVRSSTSRSSTENGE. The span at 799-815 shows a compositional bias: low complexity; it reads RTSAGSRVRSSTSRSST. Phosphothreonine is present on residues T830 and T838. The 283-residue stretch at 841-1123 folds into the Protein kinase domain; the sequence is FDEENVLSRT…LEGCRVGPDV (283 aa). Residues Y915 and Y1010 each carry the phosphotyrosine modification.

The protein belongs to the protein kinase superfamily. Ser/Thr protein kinase family.

Its subcellular location is the cell membrane. The enzyme catalyses L-seryl-[protein] + ATP = O-phospho-L-seryl-[protein] + ADP + H(+). It carries out the reaction L-threonyl-[protein] + ATP = O-phospho-L-threonyl-[protein] + ADP + H(+). This Arabidopsis thaliana (Mouse-ear cress) protein is Probable LRR receptor-like serine/threonine-protein kinase At4g36180.